Reading from the N-terminus, the 63-residue chain is Protein sigN172 (63 aa).

This is Protein sigN172 from Dictyostelium discoideum (Social amoeba).